The primary structure comprises 549 residues: Cation/acetate symporter ActP (549 aa).

The next 13 membrane-spanning stretches (helical) occupy residues 33–53, 77–97, 103–123, 148–168, 183–203, 206–226, 262–282, 303–323, 355–375, 404–424, 428–448, 464–484, and 493–513; these read WQAI…TYWA, LAIA…ALVF, GLIY…LIAE, ILSA…QMVG, IAVV…GMLA, WVQI…AFMV, ISAL…PHIL, GFMG…IMLV, LFLG…VAGL, VSKI…VLFE, IAFM…PIIL, GGWL…TIWV, and IFPY…GIWF.

It belongs to the sodium:solute symporter (SSF) (TC 2.A.21) family.

The protein resides in the cell inner membrane. Functionally, transports acetate. This chain is Cation/acetate symporter ActP, found in Citrobacter koseri (strain ATCC BAA-895 / CDC 4225-83 / SGSC4696).